The following is a 189-amino-acid chain: Tumor protein p53-inducible protein 11 (189 aa).

Residues 1–63 are Cytoplasmic-facing; that stretch reads MAGKQPPPLM…FAVREPLGLR (63 aa). Serine 14 bears the Phosphoserine mark. Residues 64–84 traverse the membrane as a helical segment; the sequence is VWQFLSAMLFSSVAIMALALP. Residues 85-108 lie on the Extracellular side of the membrane; the sequence is DQLYDAVFDGAEVTSKTPIRLYGG. A helical transmembrane segment spans residues 109–129; sequence ALLSISLIMWNALYTAEKVII. Position 130 (arginine 130) is a topological domain, cytoplasmic. Residues 131 to 151 form a helical membrane-spanning segment; it reads WTLLTEACYFGVQSLVVTATL. Topologically, residues 152 to 155 are extracellular; the sequence is AETG. A helical transmembrane segment spans residues 156-176; the sequence is LMSLGTVLLLASRLLFVIVSI. Topologically, residues 177-189 are cytoplasmic; sequence YYYYQVGRKPKKV.

The protein resides in the membrane. In Mus musculus (Mouse), this protein is Tumor protein p53-inducible protein 11 (Trp53i11).